A 428-amino-acid polypeptide reads, in one-letter code: C4-dicarboxylate transport protein (428 aa).

Helical transmembrane passes span Ser-8 to Pro-28, Leu-44 to Met-64, Val-76 to Val-96, Ile-142 to Phe-162, Val-184 to Phe-206, Leu-222 to Ala-242, Ile-326 to Val-346, and Ile-352 to Ile-372.

The protein belongs to the dicarboxylate/amino acid:cation symporter (DAACS) (TC 2.A.23) family.

It is found in the cell inner membrane. Functionally, responsible for the transport of dicarboxylates such as succinate, fumarate, and malate from the periplasm across the membrane. This is C4-dicarboxylate transport protein from Shigella flexneri.